A 271-amino-acid chain; its full sequence is NADPH-dependent 7-cyano-7-deazaguanine reductase (271 aa).

79–81 (IES) contacts substrate. 81-82 (SK) provides a ligand contact to NADPH. Cys-178 acts as the Thioimide intermediate in catalysis. Catalysis depends on Asp-185, which acts as the Proton donor. 217-218 (HE) lines the substrate pocket. 246-247 (RG) provides a ligand contact to NADPH.

It belongs to the GTP cyclohydrolase I family. QueF type 2 subfamily. As to quaternary structure, homodimer.

Its subcellular location is the cytoplasm. It carries out the reaction 7-aminomethyl-7-carbaguanine + 2 NADP(+) = 7-cyano-7-deazaguanine + 2 NADPH + 3 H(+). It functions in the pathway tRNA modification; tRNA-queuosine biosynthesis. Its function is as follows. Catalyzes the NADPH-dependent reduction of 7-cyano-7-deazaguanine (preQ0) to 7-aminomethyl-7-deazaguanine (preQ1). The polypeptide is NADPH-dependent 7-cyano-7-deazaguanine reductase (Acinetobacter baylyi (strain ATCC 33305 / BD413 / ADP1)).